The sequence spans 416 residues: GTPase Obg (416 aa).

An Obg domain is found at 1 to 157; that stretch reads MFQDVLVITV…RRLRLELMLI (157 aa). Disordered regions lie at residues 25–44 and 62–82; these read EKFV…GGSV and TYKA…RGGE. Residues 32–42 show a composition bias toward gly residues; the sequence is GPDGGDGGRGG. The span at 63-72 shows a compositional bias: basic and acidic residues; the sequence is YKAEDGEHGR. Residues 158 to 324 enclose the OBG-type G domain; that stretch reads ADVGLVGYPN…LKEALHALVR (167 aa). Residues 164 to 171, 189 to 193, 211 to 214, 277 to 280, and 305 to 307 each bind GTP; these read GYPNAGKS, FTTLS, DIPG, NKVD, and SAL. Ser171 and Thr191 together coordinate Mg(2+). The OCT domain occupies 336-414; the sequence is PRKEVQAGVE…IGGLEFEYIP (79 aa).

This sequence belongs to the TRAFAC class OBG-HflX-like GTPase superfamily. OBG GTPase family. As to quaternary structure, monomer. Mg(2+) serves as cofactor.

It is found in the cytoplasm. In terms of biological role, an essential GTPase which binds GTP, GDP and possibly (p)ppGpp with moderate affinity, with high nucleotide exchange rates and a fairly low GTP hydrolysis rate. Plays a role in control of the cell cycle, stress response, ribosome biogenesis and in those bacteria that undergo differentiation, in morphogenesis control. In Thermus thermophilus (strain ATCC 27634 / DSM 579 / HB8), this protein is GTPase Obg.